The following is a 204-amino-acid chain: Large ribosomal subunit protein eL15 (204 aa).

This sequence belongs to the eukaryotic ribosomal protein eL15 family. Component of the large ribosomal subunit.

Its subcellular location is the cytoplasm. In terms of biological role, component of the large ribosomal subunit. The ribosome is a large ribonucleoprotein complex responsible for the synthesis of proteins in the cell. This Mylopharyngodon piceus (Black carp) protein is Large ribosomal subunit protein eL15 (rpl15).